The sequence spans 294 residues: Non-selective voltage-gated ion channel VDAC2 (294 aa).

The residue at position 2 (A2) is an N-acetylalanine. ATP-binding residues include K23 and K31. K31 carries the post-translational modification N6-acetyllysine; alternate. The residue at position 31 (K31) is an N6-succinyllysine; alternate. Residue K31 forms a Glycyl lysine isopeptide (Lys-Gly) (interchain with G-Cter in ubiquitin); alternate linkage. A run of 2 beta stranded transmembrane segments spans residues 37–46 and 50–58; these read LVKLDVKTKS and VEFSTSGSS. A Glycyl lysine isopeptide (Lys-Gly) (interchain with G-Cter in ubiquitin) cross-link involves residue K64. The chain crosses the membrane as a beta stranded span at residues 65–75; that stretch reads VTGTLETKYKW. Y78 bears the Phosphotyrosine mark. 3 beta stranded membrane passes run 80-87, 91-100, and 106-115; these read LTFTEKWN, TLGTEIAIED, and LKLTFDTTFS. Phosphothreonine is present on T118. K120 bears the N6-acetyllysine; alternate mark. Residue K120 forms a Glycyl lysine isopeptide (Lys-Gly) (interchain with G-Cter in ubiquitin); alternate linkage. K121 participates in a covalent cross-link: Glycyl lysine isopeptide (Lys-Gly) (interchain with G-Cter in ubiquitin). A run of 4 beta stranded transmembrane segments spans residues 122-131, 134-141, 148-156, and 161-169; these read SGKIKSSYKR, VNLGCDVD, AIHGSAVFG, and LAGYQMTFD. Residue K172 forms a Glycyl lysine isopeptide (Lys-Gly) (interchain with G-Cter in ubiquitin) linkage. Transmembrane regions (beta stranded) follow at residues 174–186, 189–196, 200–209, 213–222, 229–238, and 242–249; these read KLTR…GYRT, FQLHTNVN, EFGGSIYQKV, LDTSVNLAWT, RFGIAAKYQL, and ASISAKVN. S251 carries the phosphoserine modification. NAD(+)-binding positions include 253-255 and 271-275; these read LIG and SALVD. Beta stranded transmembrane passes span 253–262 and 265–274; these read LIGVGYTQTL and GVKLTLSALV. The residue at position 277 (K277) is an N6-acetyllysine; alternate. K277 participates in a covalent cross-link: Glycyl lysine isopeptide (Lys-Gly) (interchain with G-Cter in ubiquitin); alternate. Residues 284-293 form a beta stranded membrane-spanning segment; sequence HKLGLALELE.

This sequence belongs to the eukaryotic mitochondrial porin family. As to quaternary structure, monomer, homodimer and higher order oligomers; formation of higher order structures is necessary for scramblase activity. Interacts with ARMC12 in a TBC1D21-dependent manner. Interacts with KLC3. Interacts with SPATA33. Interacts with PPP3CC in a SPATA33-dependent manner. Post-translationally, ubiquitinated by PRKN during mitophagy, leading to its degradation and enhancement of mitophagy. Deubiquitinated by USP30.

It is found in the mitochondrion outer membrane. It localises to the membrane. The enzyme catalyses chloride(in) = chloride(out). The catalysed reaction is K(+)(in) = K(+)(out). It catalyses the reaction a 1,2-diacyl-sn-glycero-3-phospho-L-serine(in) = a 1,2-diacyl-sn-glycero-3-phospho-L-serine(out). It carries out the reaction a 1,2-diacyl-sn-glycero-3-phosphocholine(in) = a 1,2-diacyl-sn-glycero-3-phosphocholine(out). The enzyme catalyses a 1,2-diacyl-sn-glycero-3-phospho-(1D-myo-inositol)(in) = a 1,2-diacyl-sn-glycero-3-phospho-(1D-myo-inositol)(out). Functionally, non-selective voltage-gated ion channel that mediates the transport of anions and cations through the mitochondrion outer membrane and plasma membrane. The channel adopts an open conformation at zero mV and a closed conformation at both positive and negative potentials. There are two populations of channels; the main that functions in a lower open-state conductance with lower ion selectivity, that switch, in a voltage-dependent manner, from the open to a low-conducting 'closed' state and the other that has a normal ion selectivity in the typical high conductance, 'open' state. Binds various lipids, including the sphingolipid ceramide, the phospholipid phosphatidylcholine, and the sterols cholesterol and oxysterol. Binding of ceramide promotes the mitochondrial outer membrane permeabilization (MOMP) apoptotic pathway. Its function is as follows. Catalyzes the scrambling of phospholipids across the outer mitochondrial membrane; the mechanism is unrelated to channel activity and is capable of translocating both anionic and zwitterionic phospholipids. The chain is Non-selective voltage-gated ion channel VDAC2 from Sus scrofa (Pig).